The primary structure comprises 203 residues: Nudix hydrolase 12, mitochondrial (203 aa).

Positions 18–166 (NFRLVSGCIP…WMQRALEEFL (149 aa)) constitute a Nudix hydrolase domain. A Nudix box motif is present at residues 66–87 (GGWEDDETVLEAASREAIEEAG). Residues Glu-81 and Glu-85 each contribute to the Mg(2+) site.

This sequence belongs to the Nudix hydrolase family. It depends on Mg(2+) as a cofactor. Mn(2+) serves as cofactor. Expressed in roots, leaves, stems and inflorescences.

It localises to the mitochondrion. Its function is as follows. Probably mediates the hydrolysis of some nucleoside diphosphate derivatives. The sequence is that of Nudix hydrolase 12, mitochondrial (NUDT12) from Arabidopsis thaliana (Mouse-ear cress).